A 98-amino-acid polypeptide reads, in one-letter code: NADH-ubiquinone oxidoreductase chain 4L (98 aa).

The next 3 membrane-spanning stretches (helical) occupy residues 1-21 (MSLVYMNIMTAFAVSLTGLLM), 29-49 (SLLCLEGMMLSLFVMATLMIL), and 61-81 (IILLVFAACEAALGLSLLVMV).

It belongs to the complex I subunit 4L family. In terms of assembly, core subunit of respiratory chain NADH dehydrogenase (Complex I) which is composed of 45 different subunits.

The protein resides in the mitochondrion inner membrane. The enzyme catalyses a ubiquinone + NADH + 5 H(+)(in) = a ubiquinol + NAD(+) + 4 H(+)(out). Core subunit of the mitochondrial membrane respiratory chain NADH dehydrogenase (Complex I) which catalyzes electron transfer from NADH through the respiratory chain, using ubiquinone as an electron acceptor. Part of the enzyme membrane arm which is embedded in the lipid bilayer and involved in proton translocation. In Pantholops hodgsonii (Chiru), this protein is NADH-ubiquinone oxidoreductase chain 4L (MT-ND4L).